A 601-amino-acid polypeptide reads, in one-letter code: Adenine deaminase (601 aa).

The protein belongs to the metallo-dependent hydrolases superfamily. Adenine deaminase family. The cofactor is Mn(2+).

It carries out the reaction adenine + H2O + H(+) = hypoxanthine + NH4(+). The sequence is that of Adenine deaminase from Ruegeria sp. (strain TM1040) (Silicibacter sp.).